Reading from the N-terminus, the 85-residue chain is UPF0386 protein Atu1321 (85 aa).

This sequence belongs to the UPF0386 family.

This is UPF0386 protein Atu1321 from Agrobacterium fabrum (strain C58 / ATCC 33970) (Agrobacterium tumefaciens (strain C58)).